The following is a 430-amino-acid chain: Enolase (430 aa).

Q167 is a (2R)-2-phosphoglycerate binding site. Residue E209 is the Proton donor of the active site. Mg(2+) is bound by residues D245, E286, and D313. (2R)-2-phosphoglycerate contacts are provided by K338, R367, S368, and K389. K338 functions as the Proton acceptor in the catalytic mechanism.

It belongs to the enolase family. It depends on Mg(2+) as a cofactor.

It is found in the cytoplasm. The protein localises to the secreted. It localises to the cell surface. The enzyme catalyses (2R)-2-phosphoglycerate = phosphoenolpyruvate + H2O. Its pathway is carbohydrate degradation; glycolysis; pyruvate from D-glyceraldehyde 3-phosphate: step 4/5. Functionally, catalyzes the reversible conversion of 2-phosphoglycerate (2-PG) into phosphoenolpyruvate (PEP). It is essential for the degradation of carbohydrates via glycolysis. The sequence is that of Enolase from Synechococcus sp. (strain CC9902).